Consider the following 198-residue polypeptide: Ribonuclease HII (198 aa).

The RNase H type-2 domain occupies 9 to 198 (ITVAGADEAG…LLPDQLKIDF (190 aa)). Asp-15, Glu-16, and Asp-107 together coordinate a divalent metal cation.

It belongs to the RNase HII family. Mn(2+) is required as a cofactor. Mg(2+) serves as cofactor.

It is found in the cytoplasm. The catalysed reaction is Endonucleolytic cleavage to 5'-phosphomonoester.. Its function is as follows. Endonuclease that specifically degrades the RNA of RNA-DNA hybrids. The chain is Ribonuclease HII from Christiangramia forsetii (strain DSM 17595 / CGMCC 1.15422 / KT0803) (Gramella forsetii).